A 603-amino-acid polypeptide reads, in one-letter code: Probable NOT transcription complex subunit VIP2 (603 aa).

Composition is skewed to polar residues over residues 1 to 28 and 36 to 70; these read MQGTLTSRNTAINNVPSSGVQQSGNNLS and NLPSALSQIPQGNSHGHSGMTSRGGTSVVGNPGYS. Disordered stretches follow at residues 1-70, 212-242, 306-335, and 355-377; these read MQGT…PGYS, NDGSPFDINDFPQLSSRPSSAGGPQGQLGSL, AGFNLGGTYSSNRPQQQLQHAPSVSSGGVS, and SSHSSYQQQGGGPPGIGLRPLNS. Residues 312 to 335 show a composition bias toward polar residues; sequence GTYSSNRPQQQLQHAPSVSSGGVS.

Belongs to the CNOT2/3/5 family. In terms of assembly, binds to VIP1. Interacts with Agrobacterium tumefaciens VirE2. Forms a complex made of Agrobacterium VirE2, VIP1, VIP2 and single-stranded DNA (ssDNA).

It localises to the nucleus. Transcriptional regulator required for Agrobacterium-mediated stable genetic transformation by T-DNA integration in host genome, but not for T-DNA transient expression. The polypeptide is Probable NOT transcription complex subunit VIP2 (VIP2) (Nicotiana benthamiana).